The chain runs to 590 residues: Pentatricopeptide repeat-containing protein At2g46050, mitochondrial (590 aa).

The N-terminal 109 residues, 1 to 109 (MRFTFLRSTR…RNIVTWNILI (109 aa)), are a transit peptide targeting the mitochondrion. PPR repeat units lie at residues 141-175 (DHVS…GLES), 176-206 (SCFP…VLDR), 207-241 (DLVL…KNRF), 244-266 (DYFT…IHAI), 275-305 (DIPV…MVVR), 306-340 (NVVS…NLQP), 341-375 (DELT…GSAD), 376-406 (FLSV…IREP), 407-437 (DLVS…MLQK), 441-471 (DKIT…MTEF), and 477-507 (EDEH…MPTE). Positions 512–588 (ALAAFTGGCN…TPGCSWLGDY (77 aa)) are type E motif.

The protein belongs to the PPR family. PCMP-E subfamily.

It localises to the mitochondrion. This chain is Pentatricopeptide repeat-containing protein At2g46050, mitochondrial (PCMP-E39), found in Arabidopsis thaliana (Mouse-ear cress).